Consider the following 481-residue polypeptide: Protein hedgehog (481 aa).

Residue cysteine 93 is the site of N-palmitoyl cysteine attachment. Glutamate 157, glutamate 158, aspartate 163, threonine 193, glutamate 194, aspartate 197, and aspartate 199 together coordinate Ca(2+). Glycine 265 is lipidated: Cholesterol glycine ester.

It belongs to the hedgehog family. In terms of assembly, interacts with shf. Post-translationally, the C-terminal part of the hedgehog protein precursor displays an autoproteolysis activity that results in the cleavage of the full-length protein into two parts (N-product and C-product). In addition, the C-terminal part displays a cholesterol transferase activity that results by the covalent attachment of a cholesterol moiety to the C-terminal of the newly generated N-product. The N-product is the active species in both local and long-range signaling, whereas the C-product has no signaling activity. In terms of processing, cholesterylation is required for N-product targeting to lipid rafts and multimerization. N-palmitoylation by Rasp of the hedgehog N-product, within the secretory pathway, is required for the embryonic and larval patterning activities of the hedgehog signal.

The protein resides in the nucleus. The protein localises to the cytoplasm. It is found in the cell membrane. The enzyme catalyses glycyl-L-cysteinyl-[protein] + cholesterol + H(+) = [protein]-C-terminal glycyl cholesterol ester + N-terminal L-cysteinyl-[protein]. Its function is as follows. The C-terminal part of the hedgehog protein precursor displays an autoproteolysis activity that results in the cleavage of the full-length protein into two parts (N-product and C-product). In addition, the C-terminal part displays a cholesterol transferase activity that results by the covalent attachment of a cholesterol moiety to the C-terminal of the newly generated N-product. Once cleaved, the C-product has no signaling activity and diffuses from the cell. The dually lipidated hedgehog protein N-product is a morphogen which is essential for a variety of patterning events during development. Establishes the anterior-posterior axis of the embryonic segments and patterns the larval imaginal disks. Binds to the patched (ptc) receptor, which functions in association with smoothened (smo), to activate the transcription of target genes wingless (wg), decapentaplegic (dpp) and ptc. In the absence of hh, ptc represses the constitutive signaling activity of smo through fused (fu). Essential component of a signaling pathway which regulates the Duox-dependent gut immune response to bacterial uracil; required to activate Cad99C-dependent endosome formation, norpA-dependent Ca2+ mobilization and p38 MAPK, which are essential steps in the Duox-dependent production of reactive oxygen species (ROS) in response to intestinal bacterial infection. During photoreceptor differentiation, it up-regulates transcription of Ubr3, which in turn promotes the hh-signaling pathway by mediating the ubiquitination and degradation of cos. In Drosophila pseudoobscura pseudoobscura (Fruit fly), this protein is Protein hedgehog (hh-1).